A 478-amino-acid polypeptide reads, in one-letter code: tRNA(Ile)-lysidine synthase (478 aa).

27-32 provides a ligand contact to ATP; it reads SGGSDS.

The protein belongs to the tRNA(Ile)-lysidine synthase family.

It is found in the cytoplasm. The catalysed reaction is cytidine(34) in tRNA(Ile2) + L-lysine + ATP = lysidine(34) in tRNA(Ile2) + AMP + diphosphate + H(+). Its function is as follows. Ligates lysine onto the cytidine present at position 34 of the AUA codon-specific tRNA(Ile) that contains the anticodon CAU, in an ATP-dependent manner. Cytidine is converted to lysidine, thus changing the amino acid specificity of the tRNA from methionine to isoleucine. The chain is tRNA(Ile)-lysidine synthase from Rickettsia conorii (strain ATCC VR-613 / Malish 7).